Reading from the N-terminus, the 107-residue chain is Ferredoxin (107 aa).

4Fe-4S ferredoxin-type domains lie at 8 to 37 (ERVV…LDEN) and 38 to 67 (GKSR…KASE). Cysteine 17, cysteine 20, and cysteine 23 together coordinate [4Fe-4S] cluster. Residues cysteine 27, cysteine 47, and cysteine 53 each contribute to the [3Fe-4S] cluster site. Cysteine 57 contributes to the [4Fe-4S] cluster binding site.

Monomer. [4Fe-4S] cluster serves as cofactor. The cofactor is [3Fe-4S] cluster. The N-terminus is blocked.

Its function is as follows. Ferredoxins are iron-sulfur proteins that transfer electrons in a wide variety of metabolic reactions. The chain is Ferredoxin from Pyrobaculum islandicum (strain DSM 4184 / JCM 9189 / GEO3).